The sequence spans 368 residues: F-box/kelch-repeat protein At2g44700 (368 aa).

A disordered region spans residues 1 to 23 (MSSSNEPPRKTDQPSSSSASASA). The span at 14-23 (PSSSSASASA) shows a compositional bias: low complexity. The F-box domain occupies 25 to 71 (PSLFLSLPLEIISMILARVPKRYYPILCSVSKNMRSLVRSPEIHKAR). The stretch at 177 to 221 (KVYVIGGYQDDEIAAESFDLNTQTWEAAPIPDEKESHRWICKANV) is one Kelch repeat.

The chain is F-box/kelch-repeat protein At2g44700 from Arabidopsis thaliana (Mouse-ear cress).